Here is a 72-residue protein sequence, read N- to C-terminus: Brevinin-2SN3 (72 aa).

The signal sequence occupies residues 1–22; it reads MFTLKKPLLLLVFLGMISLSLC. Residues 23–40 constitute a propeptide, removed in mature form; that stretch reads QDERGADEDDGGEMTEEE. Cysteines 66 and 72 form a disulfide.

It belongs to the frog skin active peptide (FSAP) family. Brevinin subfamily. In terms of tissue distribution, expressed by the skin glands.

Its subcellular location is the secreted. In terms of biological role, antimicrobial peptide. Active against a variety of Gram-negative and Gram-positive bacterial strains. Active against fungus C.glabrata 090902 but not against C.albicans ATCC 10231. Shows hemolytic activity against human erythrocytes. The protein is Brevinin-2SN3 of Sylvirana spinulosa (Fine-spined frog).